We begin with the raw amino-acid sequence, 281 residues long: Shikimate dehydrogenase (NADP(+)) (281 aa).

Shikimate contacts are provided by residues 15–17 (SKS) and Thr-62. The Proton acceptor role is filled by Lys-66. Shikimate-binding residues include Asn-87 and Asp-102. NADP(+) is bound by residues 127-131 (GAGGS), 151-156 (NRTPER), and Leu-217. Tyr-219 contributes to the shikimate binding site. Gly-241 lines the NADP(+) pocket.

The protein belongs to the shikimate dehydrogenase family. Homodimer.

It carries out the reaction shikimate + NADP(+) = 3-dehydroshikimate + NADPH + H(+). It participates in metabolic intermediate biosynthesis; chorismate biosynthesis; chorismate from D-erythrose 4-phosphate and phosphoenolpyruvate: step 4/7. Involved in the biosynthesis of the chorismate, which leads to the biosynthesis of aromatic amino acids. Catalyzes the reversible NADPH linked reduction of 3-dehydroshikimate (DHSA) to yield shikimate (SA). The polypeptide is Shikimate dehydrogenase (NADP(+)) (Stenotrophomonas maltophilia (strain R551-3)).